Reading from the N-terminus, the 702-residue chain is Arylphorin subunit alpha (702 aa).

The first 16 residues, Met1–Ser16, serve as a signal peptide directing secretion. N-linked (GlcNAc...) asparagine glycosylation is found at Asn75 and Asn214.

It belongs to the hemocyanin family. In terms of assembly, arylphorin is a hexamer of subunits alpha and beta. Fat body.

Its subcellular location is the secreted. It is found in the extracellular space. Arylphorin is a larval storage protein (LSP) which may serve as a storage protein used primarily as a source of aromatic amino acids for protein synthesis during metamorphosis. It is a constituent of the sclerotizing system of the cuticle, and serves as a carrier for ecdysteroid hormone. In Manduca sexta (Tobacco hawkmoth), this protein is Arylphorin subunit alpha.